The following is a 364-amino-acid chain: UDP-N-acetylglucosamine--N-acetylmuramyl-(pentapeptide) pyrophosphoryl-undecaprenol N-acetylglucosamine transferase (364 aa).

Residues 10–12 (TGG), asparagine 128, arginine 170, serine 199, isoleucine 250, and glutamine 295 each bind UDP-N-acetyl-alpha-D-glucosamine.

This sequence belongs to the glycosyltransferase 28 family. MurG subfamily.

It localises to the cell inner membrane. It catalyses the reaction di-trans,octa-cis-undecaprenyl diphospho-N-acetyl-alpha-D-muramoyl-L-alanyl-D-glutamyl-meso-2,6-diaminopimeloyl-D-alanyl-D-alanine + UDP-N-acetyl-alpha-D-glucosamine = di-trans,octa-cis-undecaprenyl diphospho-[N-acetyl-alpha-D-glucosaminyl-(1-&gt;4)]-N-acetyl-alpha-D-muramoyl-L-alanyl-D-glutamyl-meso-2,6-diaminopimeloyl-D-alanyl-D-alanine + UDP + H(+). Its pathway is cell wall biogenesis; peptidoglycan biosynthesis. Functionally, cell wall formation. Catalyzes the transfer of a GlcNAc subunit on undecaprenyl-pyrophosphoryl-MurNAc-pentapeptide (lipid intermediate I) to form undecaprenyl-pyrophosphoryl-MurNAc-(pentapeptide)GlcNAc (lipid intermediate II). This chain is UDP-N-acetylglucosamine--N-acetylmuramyl-(pentapeptide) pyrophosphoryl-undecaprenol N-acetylglucosamine transferase, found in Chlorobium phaeobacteroides (strain DSM 266 / SMG 266 / 2430).